Here is a 374-residue protein sequence, read N- to C-terminus: Retron Eco8 reverse transcriptase (374 aa).

Residues 25 to 252 (ENIITQSAIP…KEISINGYVI (228 aa)) enclose the Reverse transcriptase domain. Mg(2+)-binding residues include aspartate 107, aspartate 200, and aspartate 201.

This sequence belongs to the bacterial reverse transcriptase family.

The catalysed reaction is DNA(n) + a 2'-deoxyribonucleoside 5'-triphosphate = DNA(n+1) + diphosphate. Functionally, reverse transcriptase (RT) component of antiviral defense system retron Eco8, composed of this RT, the following endonuclease and a non-coding RNA (ncRNA) encoded between them. Expression of retron Eco8 confers protection against bacteriophages T4, T6, T7 and SECphi4, SECphi6 and SECphi18. At multiplicity of infection (MOI) of 0.02 cultures slow growth when infected with SECphi4 but do not collapse, at MOI 2 cultures collapse. Responsible for synthesis of msDNA (a branched molecule with RNA linked by a 2',5'-phosphodiester bond to ssDNA). The retron transcript serves as primer (from a conserved internal G residue) and template for the reaction, and codes for the RT. The protein is Retron Eco8 reverse transcriptase of Escherichia coli.